The sequence spans 736 residues: Ethylene receptor 2 (736 aa).

3 helical membrane-spanning segments follow: residues 22–42 (ISDFFIAVAYFSIPIELVYFV), 53–73 (VLVQFGAFIVLCGATHLINLW), and 94–114 (AAVSCATAVMLVHIIPDLLSV). Residues C64 and H68 each contribute to the Cu cation site. The GAF domain maps to 157-305 (DRHTILKTTL…VVADQVAVAL (149 aa)). Positions 348–585 (VMNHEMRTPM…TAIFIVKLGI (238 aa)) constitute a Histidine kinase domain. The residue at position 351 (H351) is a Phosphohistidine; by autocatalysis. Residues 613-730 (KVLVMDDNGF…KMRSVLSGLL (118 aa)) form the Response regulatory domain. D661 is modified (4-aspartylphosphate).

It belongs to the ethylene receptor family. As to quaternary structure, homodimer; disulfide-linked. Cu cation is required as a cofactor. Post-translationally, activation probably requires a transfer of a phosphate group between a His in the transmitter domain and an Asp of the receiver domain. In terms of tissue distribution, leaves, flowers and fruits.

The protein resides in the endoplasmic reticulum membrane. The enzyme catalyses ATP + protein L-histidine = ADP + protein N-phospho-L-histidine.. Its function is as follows. May act early in the ethylene signal transduction pathway, possibly as an ethylene receptor, or as a regulator of the pathway. This is Ethylene receptor 2 (ETR2) from Solanum lycopersicum (Tomato).